A 241-amino-acid polypeptide reads, in one-letter code: Peroxisomal membrane protein 11C (241 aa).

At 1–122 (MALLNRLASA…ADAKVLRVDS (122 aa)) the chain is on the cytoplasmic side. Residues 123–149 (AWWWTLNTALWTLSLLLGAVKALWTML) form a helical membrane-spanning segment. The Lumenal portion of the chain corresponds to 150 to 211 (KLRQKLRSPT…GVLWAGRFPP (62 aa)). Residues 212–227 (WLVGLMGTISSILSTC) form a helical membrane-spanning segment. Over 228 to 241 (QAVRAGRQAEADSP) the chain is Cytoplasmic.

It belongs to the peroxin-11 family. As to quaternary structure, homodimer. Heterodimer with either PEX11A or PEX11B. Interacts with FIS1. As to expression, expressed in liver and at much lower levels in heart, kidney and testis.

The protein resides in the peroxisome membrane. Functionally, promotes membrane protrusion and elongation on the peroxisomal surface. This chain is Peroxisomal membrane protein 11C (Pex11g), found in Mus musculus (Mouse).